Reading from the N-terminus, the 184-residue chain is Peptidyl-tRNA hydrolase (184 aa).

Residue Tyr-14 participates in tRNA binding. The active-site Proton acceptor is His-19. Positions 60 and 62 each coordinate tRNA.

The protein belongs to the PTH family. In terms of assembly, monomer.

It localises to the cytoplasm. The enzyme catalyses an N-acyl-L-alpha-aminoacyl-tRNA + H2O = an N-acyl-L-amino acid + a tRNA + H(+). Functionally, hydrolyzes ribosome-free peptidyl-tRNAs (with 1 or more amino acids incorporated), which drop off the ribosome during protein synthesis, or as a result of ribosome stalling. In terms of biological role, catalyzes the release of premature peptidyl moieties from peptidyl-tRNA molecules trapped in stalled 50S ribosomal subunits, and thus maintains levels of free tRNAs and 50S ribosomes. This is Peptidyl-tRNA hydrolase from Mesomycoplasma hyopneumoniae (strain 232) (Mycoplasma hyopneumoniae).